We begin with the raw amino-acid sequence, 524 residues long: Zinc finger protein 346 (524 aa).

7 consecutive Matrin-type zinc fingers follow at residues T34–R64, D92–R126, K162–K192, G226–M260, F286–S316, F343–S373, and F400–S430. Residues C36, C39, H52, H58, C97, C100, H113, and H119 each contribute to the Zn(2+) site. 2 disordered regions span residues S453 to P486 and P494 to P513. A compositionally biased stretch (low complexity) spans P476–P486.

The protein localises to the nucleus. The protein resides in the cytoplasm. Its function is as follows. Binds preferentially to dsRNA, but also to RNA-DNA hybrids. This is Zinc finger protein 346 from Xenopus laevis (African clawed frog).